Consider the following 149-residue polypeptide: Large ribosomal subunit protein bL9 (149 aa).

Belongs to the bacterial ribosomal protein bL9 family.

In terms of biological role, binds to the 23S rRNA. The protein is Large ribosomal subunit protein bL9 of Thermotoga sp. (strain RQ2).